Consider the following 124-residue polypeptide: Large ribosomal subunit protein uL18 (124 aa).

The protein belongs to the universal ribosomal protein uL18 family. As to quaternary structure, part of the 50S ribosomal subunit; part of the 5S rRNA/L5/L18/L25 subcomplex. Contacts the 5S and 23S rRNAs.

In terms of biological role, this is one of the proteins that bind and probably mediate the attachment of the 5S RNA into the large ribosomal subunit, where it forms part of the central protuberance. This is Large ribosomal subunit protein uL18 from Orientia tsutsugamushi (strain Boryong) (Rickettsia tsutsugamushi).